A 352-amino-acid chain; its full sequence is S-adenosylmethionine:tRNA ribosyltransferase-isomerase (352 aa).

The protein belongs to the QueA family. As to quaternary structure, monomer.

The protein localises to the cytoplasm. It catalyses the reaction 7-aminomethyl-7-carbaguanosine(34) in tRNA + S-adenosyl-L-methionine = epoxyqueuosine(34) in tRNA + adenine + L-methionine + 2 H(+). Its pathway is tRNA modification; tRNA-queuosine biosynthesis. Transfers and isomerizes the ribose moiety from AdoMet to the 7-aminomethyl group of 7-deazaguanine (preQ1-tRNA) to give epoxyqueuosine (oQ-tRNA). The chain is S-adenosylmethionine:tRNA ribosyltransferase-isomerase from Vibrio cholerae serotype O1 (strain ATCC 39541 / Classical Ogawa 395 / O395).